The primary structure comprises 60 residues: Large ribosomal subunit protein uL30 (60 aa).

The protein belongs to the universal ribosomal protein uL30 family. In terms of assembly, part of the 50S ribosomal subunit.

This chain is Large ribosomal subunit protein uL30, found in Dehalococcoides mccartyi (strain CBDB1).